The chain runs to 69 residues: UPF0150 protein ssr1258 (69 aa).

The protein belongs to the UPF0150 family.

The sequence is that of UPF0150 protein ssr1258 from Synechocystis sp. (strain ATCC 27184 / PCC 6803 / Kazusa).